We begin with the raw amino-acid sequence, 238 residues long: MALPEMKRVLLKLSGEVLMGEQDYGIDPAFVMELAKEVKAAREQGLQICLVIGGGNIFRGMAGAAQGMERAQADYMGMLATVMNALAMQSALEQLGVHTRVQSAIQMDQVCEPVIRRRAERHLEKDRVVIFAAGVGAPYFTTDSGAALRAAEMNCDALLKGTSVDGVYDSDPKTNPDAKRYDTVGYGKVLADNLKVMDASAVALCRDNDIPIIVFSIREKGNLARVLAGEGVQTVVQN.

ATP is bound at residue 12–15 (KLSG). Position 54 (Gly-54) interacts with UMP. ATP contacts are provided by Gly-55 and Arg-59. UMP contacts are provided by residues Asp-74 and 135-142 (VGAPYFTT). ATP contacts are provided by Thr-162, Tyr-168, and Asp-171.

This sequence belongs to the UMP kinase family. As to quaternary structure, homohexamer.

The protein resides in the cytoplasm. It carries out the reaction UMP + ATP = UDP + ADP. It functions in the pathway pyrimidine metabolism; CTP biosynthesis via de novo pathway; UDP from UMP (UMPK route): step 1/1. With respect to regulation, inhibited by UTP. In terms of biological role, catalyzes the reversible phosphorylation of UMP to UDP. The chain is Uridylate kinase from Erythrobacter litoralis (strain HTCC2594).